Reading from the N-terminus, the 146-residue chain is Large ribosomal subunit protein bL9 (146 aa).

It belongs to the bacterial ribosomal protein bL9 family.

Its function is as follows. Binds to the 23S rRNA. The sequence is that of Large ribosomal subunit protein bL9 from Nautilia profundicola (strain ATCC BAA-1463 / DSM 18972 / AmH).